A 275-amino-acid polypeptide reads, in one-letter code: NH(3)-dependent NAD(+) synthetase (275 aa).

Residue 47–54 coordinates ATP; the sequence is GISGGQDS. Aspartate 53 is a Mg(2+) binding site. Arginine 141 is a deamido-NAD(+) binding site. Residue threonine 161 coordinates ATP. Residue glutamate 166 coordinates Mg(2+). Deamido-NAD(+) contacts are provided by lysine 174 and aspartate 181. Positions 190 and 212 each coordinate ATP. 261–262 lines the deamido-NAD(+) pocket; that stretch reads HK.

This sequence belongs to the NAD synthetase family. As to quaternary structure, homodimer.

The catalysed reaction is deamido-NAD(+) + NH4(+) + ATP = AMP + diphosphate + NAD(+) + H(+). It functions in the pathway cofactor biosynthesis; NAD(+) biosynthesis; NAD(+) from deamido-NAD(+) (ammonia route): step 1/1. Its function is as follows. Catalyzes the ATP-dependent amidation of deamido-NAD to form NAD. Uses ammonia as a nitrogen source. The chain is NH(3)-dependent NAD(+) synthetase from Enterococcus faecalis (strain ATCC 700802 / V583).